Here is a 508-residue protein sequence, read N- to C-terminus: Maturase K (508 aa).

The protein belongs to the intron maturase 2 family. MatK subfamily.

The protein resides in the plastid. Its subcellular location is the chloroplast. Its function is as follows. Usually encoded in the trnK tRNA gene intron. Probably assists in splicing its own and other chloroplast group II introns. The polypeptide is Maturase K (Verbena rigida (Tuberous vervain)).